Consider the following 149-residue polypeptide: Ribosome-binding factor A (149 aa).

Residues 123–149 form a disordered region; it reads LAKLREGAAPAGDADPYKTSSKSESEE.

This sequence belongs to the RbfA family. As to quaternary structure, monomer. Binds 30S ribosomal subunits, but not 50S ribosomal subunits or 70S ribosomes.

The protein resides in the cytoplasm. Its function is as follows. One of several proteins that assist in the late maturation steps of the functional core of the 30S ribosomal subunit. Associates with free 30S ribosomal subunits (but not with 30S subunits that are part of 70S ribosomes or polysomes). Required for efficient processing of 16S rRNA. May interact with the 5'-terminal helix region of 16S rRNA. The sequence is that of Ribosome-binding factor A from Corynebacterium glutamicum (strain ATCC 13032 / DSM 20300 / JCM 1318 / BCRC 11384 / CCUG 27702 / LMG 3730 / NBRC 12168 / NCIMB 10025 / NRRL B-2784 / 534).